The following is a 76-amino-acid chain: Small ribosomal subunit protein bS18 (76 aa).

This sequence belongs to the bacterial ribosomal protein bS18 family. As to quaternary structure, part of the 30S ribosomal subunit. Forms a tight heterodimer with protein bS6.

Functionally, binds as a heterodimer with protein bS6 to the central domain of the 16S rRNA, where it helps stabilize the platform of the 30S subunit. In Brevibacillus brevis (strain 47 / JCM 6285 / NBRC 100599), this protein is Small ribosomal subunit protein bS18.